Consider the following 311-residue polypeptide: Probable protein phosphatase 2C 59 (311 aa).

A compositionally biased stretch (low complexity) spans methionine 1 to valine 14. A disordered region spans residues methionine 1–leucine 26. In terms of domain architecture, PPM-type phosphatase spans serine 33–phenylalanine 279. Positions 69, 70, 231, and 270 each coordinate Mn(2+).

The protein belongs to the PP2C family. As to quaternary structure, interacts with the Pseudomonas syringae pv. maculicola effector HopW1-1 (via C-terminus). Mg(2+) serves as cofactor. The cofactor is Mn(2+).

It carries out the reaction O-phospho-L-seryl-[protein] + H2O = L-seryl-[protein] + phosphate. The catalysed reaction is O-phospho-L-threonyl-[protein] + H2O = L-threonyl-[protein] + phosphate. Its activity is regulated as follows. Inhibited by sodium fluoride (NaF). Functionally, protein phosphatase that modulates defense response to pathogenic bacteria, conferring resistance and promoting salicylic acid (SA) accumulation. The protein is Probable protein phosphatase 2C 59 (WIN2) of Arabidopsis thaliana (Mouse-ear cress).